We begin with the raw amino-acid sequence, 255 residues long: Proteasome subunit alpha 2 (255 aa).

The tract at residues 229–255 is disordered; sequence AGSSLEEMLPTPAATEDAPPANGDAPS. Residues 238-249 show a composition bias toward low complexity; the sequence is PTPAATEDAPPA.

It belongs to the peptidase T1A family. As to quaternary structure, the 20S proteasome core is composed of 14 alpha and 14 beta subunits that assemble into four stacked heptameric rings, resulting in a barrel-shaped structure. The two inner rings, each composed of seven catalytic beta subunits, are sandwiched by two outer rings, each composed of seven alpha subunits. All four combinations of alpha- and beta-subunits (beta2-alpha1, beta2-alpha2, beta1-alpha2 and beta1-alpha1) yield fully assembled and proteolytically active proteasomes. The catalytic chamber with the active sites is on the inside of the barrel. Has probably a gated structure, the ends of the cylinder being occluded by the N-termini of the alpha-subunits. Is likely capped by the proteasome-associated ATPase, ARC. In terms of processing, the N-terminus is blocked.

The protein resides in the cytoplasm. The protein operates within protein degradation; proteasomal Pup-dependent pathway. With respect to regulation, the formation of the proteasomal ATPase ARC-20S proteasome complex, likely via the docking of the C-termini of ARC into the intersubunit pockets in the alpha-rings, may trigger opening of the gate for substrate entry. Interconversion between the open-gate and close-gate conformations leads to a dynamic regulation of the 20S proteasome proteolysis activity. Its function is as follows. Component of the proteasome core, a large protease complex with broad specificity involved in protein degradation. The R.erythropolis proteasomes are able to cleave oligopeptides after Tyr, Phe and Leu, very poorly after Arg but not after Glu. Thus, displays chymotrypsin-like activity, low trypsin-like activity but no caspase-like activity. The chain is Proteasome subunit alpha 2 from Rhodococcus erythropolis (Arthrobacter picolinophilus).